Here is a 409-residue protein sequence, read N- to C-terminus: Histidinol dehydrogenase homolog (409 aa).

Belongs to the histidinol dehydrogenase family.

The sequence is that of Histidinol dehydrogenase homolog from Synechocystis sp. (strain ATCC 27184 / PCC 6803 / Kazusa).